A 445-amino-acid polypeptide reads, in one-letter code: TNF receptor-associated factor family protein DDB_G0290971 (445 aa).

The RING-type; degenerate zinc finger occupies 23-67; the sequence is CPICFDLYYSSSSKKEVFQCRDGHLACKSCWSDSLLNKKECMICR. 2 TRAF-type zinc fingers span residues 133–186 and 186–242; these read KHQV…QLDA and AHAL…ESID. The stretch at 269 to 307 forms a coiled coil; it reads QLELVECKNQIYQINNKYEKLLERVIKLEQLSMDASNKL. In terms of domain architecture, MATH spans 314–441; the sequence is KNSIIFATFS…EDKLVIGLRI (128 aa).

Belongs to the TNF receptor-associated factor family. A subfamily.

It is found in the cytoplasm. Its function is as follows. Probable adapter protein and signal transducer that links members of the tumor necrosis factor receptor family to different signaling pathways by association with the receptor cytoplasmic domain and kinases. The sequence is that of TNF receptor-associated factor family protein DDB_G0290971 from Dictyostelium discoideum (Social amoeba).